Consider the following 287-residue polypeptide: MATFELIPYRLYLSQSNTWIHRIKAEIKIYIVALLWISIFIFSYFKLCIIALSLIAISFTIRSKQNIIQKHLLQTLLMTFLTTVLSFSVAISYKQYAEQEQSQYLSDSKKYKNSSSYYYIQIANDQRIKRQYLITTLKPSLYFFITIYSIKLVMITTSPEVLVITIYRSRIINKIFKNELLFIFLLSSHIVTSIINRIDKVIQVTSLRGSLNLYNSLTRPLMFSLLIFQVFFLEIIRESKEIAQALYTRNLNQENNNFLKIYTVKSNFSDRLNIIISTLYFIILALA.

Helical transmembrane passes span Val32–Leu52, Leu72–Ser92, Leu133–Val153, Ile175–Ile195, Ser216–Ile236, and Ser266–Leu286.

It belongs to the ycf92 family.

It is found in the plastid. The protein resides in the chloroplast membrane. This is an uncharacterized protein from Pyropia yezoensis (Susabi-nori).